Consider the following 137-residue polypeptide: Holo-[acyl-carrier-protein] synthase (137 aa).

Mg(2+) is bound by residues D8 and E61.

This sequence belongs to the P-Pant transferase superfamily. AcpS family. The cofactor is Mg(2+).

It localises to the cytoplasm. The catalysed reaction is apo-[ACP] + CoA = holo-[ACP] + adenosine 3',5'-bisphosphate + H(+). In terms of biological role, transfers the 4'-phosphopantetheine moiety from coenzyme A to a Ser of acyl-carrier-protein. The polypeptide is Holo-[acyl-carrier-protein] synthase (Afipia carboxidovorans (strain ATCC 49405 / DSM 1227 / KCTC 32145 / OM5) (Oligotropha carboxidovorans)).